The chain runs to 199 residues: ATP-dependent Clp protease proteolytic subunit (199 aa).

Residue serine 97 is the Nucleophile of the active site. The active site involves histidine 122.

This sequence belongs to the peptidase S14 family. As to quaternary structure, fourteen ClpP subunits assemble into 2 heptameric rings which stack back to back to give a disk-like structure with a central cavity, resembling the structure of eukaryotic proteasomes.

It is found in the cytoplasm. The catalysed reaction is Hydrolysis of proteins to small peptides in the presence of ATP and magnesium. alpha-casein is the usual test substrate. In the absence of ATP, only oligopeptides shorter than five residues are hydrolyzed (such as succinyl-Leu-Tyr-|-NHMec, and Leu-Tyr-Leu-|-Tyr-Trp, in which cleavage of the -Tyr-|-Leu- and -Tyr-|-Trp bonds also occurs).. Cleaves peptides in various proteins in a process that requires ATP hydrolysis. Has a chymotrypsin-like activity. Plays a major role in the degradation of misfolded proteins. This is ATP-dependent Clp protease proteolytic subunit from Geotalea uraniireducens (strain Rf4) (Geobacter uraniireducens).